Reading from the N-terminus, the 26-residue chain is ATP synthase subunit gamma, mitochondrial (26 aa).

It belongs to the ATPase gamma chain family. F-type ATPases have 2 components, CF(1) - the catalytic core - and CF(0) - the membrane proton channel. CF(1) has five subunits: alpha(3), beta(3), gamma(1), delta(1), epsilon(1). CF(0) has three main subunits: a, b and c.

It localises to the mitochondrion. The protein resides in the mitochondrion inner membrane. Its function is as follows. Mitochondrial membrane ATP synthase (F(1)F(0) ATP synthase or Complex V) produces ATP from ADP in the presence of a proton gradient across the membrane which is generated by electron transport complexes of the respiratory chain. F-type ATPases consist of two structural domains, F(1) - containing the extramembraneous catalytic core, and F(0) - containing the membrane proton channel, linked together by a central stalk and a peripheral stalk. During catalysis, ATP synthesis in the catalytic domain of F(1) is coupled via a rotary mechanism of the central stalk subunits to proton translocation. Part of the complex F(1) domain and the central stalk which is part of the complex rotary element. The gamma subunit protrudes into the catalytic domain formed of alpha(3)beta(3). Rotation of the central stalk against the surrounding alpha(3)beta(3) subunits leads to hydrolysis of ATP in three separate catalytic sites on the beta subunits. The protein is ATP synthase subunit gamma, mitochondrial (ATPC) of Spinacia oleracea (Spinach).